The following is a 462-amino-acid chain: Cytochrome P450 20A1 (462 aa).

A helical transmembrane segment spans residues 4-24 (FAIFAVTFLLALVGAVLYLYP). Position 409 (Cys-409) interacts with heme.

The protein belongs to the cytochrome P450 family. Heme is required as a cofactor.

It is found in the membrane. The protein is Cytochrome P450 20A1 (CYP20A1) of Homo sapiens (Human).